We begin with the raw amino-acid sequence, 584 residues long: uncharacterized protein (584 aa).

A compositionally biased stretch (polar residues) spans 353 to 375 (NSEGQTNAETSLNGKGTVGNQWA). Disordered regions lie at residues 353 to 379 (NSEG…SPPE), 400 to 426 (LESK…VSSH), and 463 to 565 (SVDS…CNSG). Polar residues predominate over residues 502–511 (KANSPASSRL). Basic and acidic residues predominate over residues 516 to 535 (DSSHLSKHVNFDKNPDHSEA).

This is an uncharacterized protein from Mus musculus (Mouse).